Reading from the N-terminus, the 204-residue chain is Urease accessory protein UreG (204 aa).

Residue 11 to 18 participates in GTP binding; it reads GPVGAGKT.

It belongs to the SIMIBI class G3E GTPase family. UreG subfamily. As to quaternary structure, homodimer. UreD, UreF and UreG form a complex that acts as a GTP-hydrolysis-dependent molecular chaperone, activating the urease apoprotein by helping to assemble the nickel containing metallocenter of UreC. The UreE protein probably delivers the nickel.

The protein localises to the cytoplasm. Functionally, facilitates the functional incorporation of the urease nickel metallocenter. This process requires GTP hydrolysis, probably effectuated by UreG. The chain is Urease accessory protein UreG from Staphylococcus epidermidis (strain ATCC 12228 / FDA PCI 1200).